Consider the following 125-residue polypeptide: Sulfiredoxin, chloroplastic/mitochondrial (125 aa).

Residues 1 to 22 constitute a chloroplast and mitochondrion transit peptide; it reads MANLMMRLPISLRSFSVSASSS.

It belongs to the sulfiredoxin family. Low expression in photosynthetic tissues such as leaves and sepals.

The protein resides in the plastid. Its subcellular location is the chloroplast. It is found in the mitochondrion. It carries out the reaction S-hydroxy-S-oxy-L-cysteinyl-[peroxiredoxin] + [protein]-dithiol + ATP = S-hydroxy-L-cysteinyl-[peroxiredoxin] + [protein]-disulfide + ADP + phosphate. In terms of biological role, contributes to oxidative stress resistance by reducing cysteine-sulfinic acid formed under exposure to oxidants in a peroxiredoxin. May catalyze the reduction in a multi-step process by acting both as a specific phosphotransferase and a thioltransferase. Required to switch on the antioxidant pathway to regenerate the oxidative damage. In mitochondrion, catalyzes the retroreduction of the inactive sulfinic form of atypical Prx IIF using thioredoxin as reducing agent. The chain is Sulfiredoxin, chloroplastic/mitochondrial (SRX) from Arabidopsis thaliana (Mouse-ear cress).